We begin with the raw amino-acid sequence, 74 residues long: Consomatin Ma1 (74 aa).

An N-terminal signal peptide occupies residues 1-22 (MQTAYWVMVMMMVWITAPLSEG). The propeptide occupies 23-57 (GKLNGEIRGLVSHILIPQHTLRSLTSRDRSDNGGS). Cysteines 63 and 68 form a disulfide. Tryptophan 65 carries the post-translational modification D-tryptophan. 4-hydroxyproline occurs at positions 69, 70, and 72.

The protein belongs to the conotoxin C superfamily. Consomatin family. In terms of tissue distribution, expressed by the venom duct.

The protein resides in the secreted. In terms of biological role, moderately activates human somatostatin receptors (SSTR) with a preferential activation of SSTR1 and SSTR4. In vivo, does not cause behavioral changes in mice within a few minutes of intracranial injection, but causes a progressive loss of movement thereafter. Four to five hours after injection, mice recover, even with the highest dose tested. Shows antinociception and antihyperalgesia activities in two mouse models of acute pain, most probably by acting outside the central nervous system. The chain is Consomatin Ma1 from Conus magus (Magical cone).